The primary structure comprises 768 residues: DNA topoisomerase 4 subunit A (768 aa).

Positions Leu38–Ala521 constitute a Topo IIA-type catalytic domain. Residue Tyr126 is the O-(5'-phospho-DNA)-tyrosine intermediate of the active site.

This sequence belongs to the type II topoisomerase GyrA/ParC subunit family. ParC type 1 subfamily. In terms of assembly, heterotetramer composed of ParC and ParE.

The protein localises to the cell membrane. The catalysed reaction is ATP-dependent breakage, passage and rejoining of double-stranded DNA.. Functionally, topoisomerase IV is essential for chromosome segregation. It relaxes supercoiled DNA. Performs the decatenation events required during the replication of a circular DNA molecule. The sequence is that of DNA topoisomerase 4 subunit A from Neisseria gonorrhoeae.